A 369-amino-acid chain; its full sequence is Quinolinate synthase (369 aa).

Residues His47 and Ser64 each coordinate iminosuccinate. Residue Cys111 coordinates [4Fe-4S] cluster. Residues 142 to 144 and Ser163 each bind iminosuccinate; that span reads YVN. [4Fe-4S] cluster is bound at residue Cys231. Iminosuccinate-binding positions include 257–259 and Thr274; that span reads HPE. Cys321 serves as a coordination point for [4Fe-4S] cluster.

Belongs to the quinolinate synthase family. Type 3 subfamily. [4Fe-4S] cluster is required as a cofactor.

It localises to the cytoplasm. The enzyme catalyses iminosuccinate + dihydroxyacetone phosphate = quinolinate + phosphate + 2 H2O + H(+). It functions in the pathway cofactor biosynthesis; NAD(+) biosynthesis; quinolinate from iminoaspartate: step 1/1. Functionally, catalyzes the condensation of iminoaspartate with dihydroxyacetone phosphate to form quinolinate. The protein is Quinolinate synthase of Bacillus licheniformis (strain ATCC 14580 / DSM 13 / JCM 2505 / CCUG 7422 / NBRC 12200 / NCIMB 9375 / NCTC 10341 / NRRL NRS-1264 / Gibson 46).